We begin with the raw amino-acid sequence, 490 residues long: 23S rRNA (uracil(1939)-C(5))-methyltransferase RlmD (490 aa).

The region spanning 14 to 75 is the TRAM domain; sequence APAPAEYPID…SSFEKATLTA (62 aa). Residues C88, C98, C101, and C180 each coordinate [4Fe-4S] cluster. 6 residues coordinate S-adenosyl-L-methionine: Q289, F318, N323, E339, N374, and D395. The active-site Nucleophile is C446.

The protein belongs to the class I-like SAM-binding methyltransferase superfamily. RNA M5U methyltransferase family. RlmD subfamily.

The catalysed reaction is uridine(1939) in 23S rRNA + S-adenosyl-L-methionine = 5-methyluridine(1939) in 23S rRNA + S-adenosyl-L-homocysteine + H(+). Functionally, catalyzes the formation of 5-methyl-uridine at position 1939 (m5U1939) in 23S rRNA. The protein is 23S rRNA (uracil(1939)-C(5))-methyltransferase RlmD of Polaromonas naphthalenivorans (strain CJ2).